Reading from the N-terminus, the 680-residue chain is DNA-directed RNA polymerase subunit beta' (680 aa).

Zn(2+) is bound by residues Cys-69, Cys-71, Cys-87, and Cys-90. The Mg(2+) site is built by Asp-489, Asp-491, and Asp-493.

It belongs to the RNA polymerase beta' chain family. RpoC1 subfamily. As to quaternary structure, in plastids the minimal PEP RNA polymerase catalytic core is composed of four subunits: alpha, beta, beta', and beta''. When a (nuclear-encoded) sigma factor is associated with the core the holoenzyme is formed, which can initiate transcription. The cofactor is Mg(2+). Zn(2+) serves as cofactor.

It is found in the plastid. Its subcellular location is the chloroplast. The enzyme catalyses RNA(n) + a ribonucleoside 5'-triphosphate = RNA(n+1) + diphosphate. In terms of biological role, DNA-dependent RNA polymerase catalyzes the transcription of DNA into RNA using the four ribonucleoside triphosphates as substrates. This Citrus sinensis (Sweet orange) protein is DNA-directed RNA polymerase subunit beta'.